Reading from the N-terminus, the 201-residue chain is Recombination protein RecR (201 aa).

The C4-type zinc-finger motif lies at 60 to 75 (CKTCGNIDTQNPCTVC). The Toprim domain maps to 83–178 (AIIVVVADVA…KVTRLAHGVP (96 aa)).

The protein belongs to the RecR family.

Its function is as follows. May play a role in DNA repair. It seems to be involved in an RecBC-independent recombinational process of DNA repair. It may act with RecF and RecO. This Rhodopseudomonas palustris (strain BisA53) protein is Recombination protein RecR.